Here is a 311-residue protein sequence, read N- to C-terminus: Homeobox protein knotted-1-like 10 (311 aa).

Disordered stretches follow at residues 1–45 and 153–184; these read MEDL…PATT and LCGG…DAAD. Gly residues predominate over residues 12 to 22; that stretch reads SRGGGGGGGGA. Positions 197–217 constitute an ELK domain; sequence ELKEMLLKKYSGCLSRLRSEF. Residues 218-281 constitute a DNA-binding region (homeobox; TALE-type); that stretch reads LKKRKKGKLP…NQRKRHWKPS (64 aa).

The protein belongs to the TALE/KNOX homeobox family.

It is found in the nucleus. In terms of biological role, probable transcription factor that may be involved in shoot formation during embryogenesis. In Oryza sativa subsp. indica (Rice), this protein is Homeobox protein knotted-1-like 10 (OSH71).